The chain runs to 310 residues: tRNA dimethylallyltransferase (310 aa).

5 to 12 (GPTASGKS) contacts ATP. Position 7–12 (7–12 (TASGKS)) interacts with substrate. Residues 30–33 (DSMQ) are interaction with substrate tRNA.

It belongs to the IPP transferase family. Monomer. Mg(2+) serves as cofactor.

The enzyme catalyses adenosine(37) in tRNA + dimethylallyl diphosphate = N(6)-dimethylallyladenosine(37) in tRNA + diphosphate. Its function is as follows. Catalyzes the transfer of a dimethylallyl group onto the adenine at position 37 in tRNAs that read codons beginning with uridine, leading to the formation of N6-(dimethylallyl)adenosine (i(6)A). The chain is tRNA dimethylallyltransferase from Rhodopseudomonas palustris (strain HaA2).